Consider the following 787-residue polypeptide: DNA ligase (787 aa).

NAD(+)-binding positions include 32-36, 81-82, and Glu121; these read DVEYD and SL. The active-site N6-AMP-lysine intermediate is Lys123. NAD(+)-binding residues include Arg144, Glu181, Lys297, and Lys321. 4 residues coordinate Zn(2+): Cys415, Cys418, Cys445, and Cys451. The region spanning 703 to 787 is the BRCT domain; it reads VEGLPLAGQT…RLIELGVAVD (85 aa).

It belongs to the NAD-dependent DNA ligase family. LigA subfamily. It depends on Mg(2+) as a cofactor. Requires Mn(2+) as cofactor.

The enzyme catalyses NAD(+) + (deoxyribonucleotide)n-3'-hydroxyl + 5'-phospho-(deoxyribonucleotide)m = (deoxyribonucleotide)n+m + AMP + beta-nicotinamide D-nucleotide.. Its function is as follows. DNA ligase that catalyzes the formation of phosphodiester linkages between 5'-phosphoryl and 3'-hydroxyl groups in double-stranded DNA using NAD as a coenzyme and as the energy source for the reaction. It is essential for DNA replication and repair of damaged DNA. The protein is DNA ligase of Pseudomonas syringae pv. syringae (strain B728a).